We begin with the raw amino-acid sequence, 25 residues long: TKIADLRSQTTDQLSDELLKLXKEQ.

It belongs to the universal ribosomal protein uL29 family.

The sequence is that of Large ribosomal subunit protein uL29 (rpmC) from Brevundimonas vesicularis (Pseudomonas vesicularis).